Here is a 397-residue protein sequence, read N- to C-terminus: Elongation factor Tu-1 (397 aa).

Residues 10 to 206 enclose the tr-type G domain; that stretch reads KPHVNIGTIG…AVDENIPEPE (197 aa). Residues 19-26 form a G1 region; the sequence is GHIDHGKT. 19–26 contacts GTP; the sequence is GHIDHGKT. Thr-26 contacts Mg(2+). A G2 region spans residues 62–66; the sequence is GITIS. The tract at residues 83–86 is G3; the sequence is DCPG. GTP contacts are provided by residues 83-87 and 138-141; these read DCPGH and NKAD. The segment at 138 to 141 is G4; sequence NKAD. A G5 region spans residues 176-178; it reads SAL. Position 386 is a phosphothreonine (Thr-386).

The protein belongs to the TRAFAC class translation factor GTPase superfamily. Classic translation factor GTPase family. EF-Tu/EF-1A subfamily. Monomer. Post-translationally, phosphorylated on threonine and serine.

Its subcellular location is the cytoplasm. It catalyses the reaction GTP + H2O = GDP + phosphate + H(+). In terms of biological role, GTP hydrolase that promotes the GTP-dependent binding of aminoacyl-tRNA to the A-site of ribosomes during protein biosynthesis. The sequence is that of Elongation factor Tu-1 from Streptomyces collinus.